We begin with the raw amino-acid sequence, 458 residues long: Argininosuccinate lyase (458 aa).

This sequence belongs to the lyase 1 family. Argininosuccinate lyase subfamily.

Its subcellular location is the cytoplasm. The catalysed reaction is 2-(N(omega)-L-arginino)succinate = fumarate + L-arginine. It participates in amino-acid biosynthesis; L-arginine biosynthesis; L-arginine from L-ornithine and carbamoyl phosphate: step 3/3. This is Argininosuccinate lyase from Salmonella agona (strain SL483).